Here is a 608-residue protein sequence, read N- to C-terminus: Glutamyl-tRNA(Gln) amidotransferase subunit E (608 aa).

The interval 401–428 (PEETRAANPDGTTRFLRPRPGAARMYPE) is disordered.

This sequence belongs to the GatB/GatE family. GatE subfamily. In terms of assembly, heterodimer of GatD and GatE.

The catalysed reaction is L-glutamyl-tRNA(Gln) + L-glutamine + ATP + H2O = L-glutaminyl-tRNA(Gln) + L-glutamate + ADP + phosphate + H(+). Functionally, allows the formation of correctly charged Gln-tRNA(Gln) through the transamidation of misacylated Glu-tRNA(Gln) in organisms which lack glutaminyl-tRNA synthetase. The reaction takes place in the presence of glutamine and ATP through an activated gamma-phospho-Glu-tRNA(Gln). The GatDE system is specific for glutamate and does not act on aspartate. The sequence is that of Glutamyl-tRNA(Gln) amidotransferase subunit E from Pyrobaculum arsenaticum (strain DSM 13514 / JCM 11321 / PZ6).